We begin with the raw amino-acid sequence, 427 residues long: Glutamate-1-semialdehyde 2,1-aminomutase (427 aa).

K268 is modified (N6-(pyridoxal phosphate)lysine).

It belongs to the class-III pyridoxal-phosphate-dependent aminotransferase family. HemL subfamily. Requires pyridoxal 5'-phosphate as cofactor.

The protein localises to the cytoplasm. It catalyses the reaction (S)-4-amino-5-oxopentanoate = 5-aminolevulinate. It functions in the pathway porphyrin-containing compound metabolism; protoporphyrin-IX biosynthesis; 5-aminolevulinate from L-glutamyl-tRNA(Glu): step 2/2. This is Glutamate-1-semialdehyde 2,1-aminomutase from Methanococcus maripaludis (strain DSM 14266 / JCM 13030 / NBRC 101832 / S2 / LL).